A 473-amino-acid chain; its full sequence is Proton-coupled folate transporter (473 aa).

Positions 1-20 (MAAPSDPPTAATPPAPPPPA) are enriched in pro residues. Residues 1-21 (MAAPSDPPTAATPPAPPPPAR) form a disordered region. Residues 1–29 (MAAPSDPPTAATPPAPPPPARRCLLAPSV) are Cytoplasmic-facing. Residues 30 to 48 (EPLLFLATLALGLQVPLAT) traverse the membrane as a helical segment. Residues 49–90 (QYLWDRLGAERGYVGPNASSPHGCGNGSGAVDPLREEVEALV) lie on the Extracellular side of the membrane. N-linked (GlcNAc...) asparagine glycans are attached at residues N65 and N74. Cysteines 72 and 306 form a disulfide. The chain crosses the membrane as a helical span at residues 91 to 116 (AHWNLCINLGGFFVGLFSVTLFGPWS). N98 is a pemetrexed binding site. At 117–120 (DSVG) the chain is on the cytoplasmic side. Residues 121 to 143 (RRPVLVLPAVGMAVQAAVYLLVM) form a helical membrane-spanning segment. Over 144 to 148 (YLRLH) the chain is Extracellular. Residues 149-162 (VAYLLLGRIISGLL) traverse the membrane as a helical segment. Residues 163–185 (GDYNLILAGCFASVADSSNQRTR) are Cytoplasmic-facing. H(+) is bound by residues D164 and E193. The helical transmembrane segment at 186–211 (TFRVAILEACLGVAGMVASVGGGQWR) threads the bilayer. E193 provides a ligand contact to pemetrexed. At 212–216 (KAEGY) the chain is on the extracellular side. The chain crosses the membrane as a helical span at residues 217-235 (INPFWLVLAASLAAALYAA). The Cytoplasmic segment spans residues 236 to 274 (LCLQETVKQRRAAKLLTLQHYKAVYKLYTAPEDLSSRRK). The helical transmembrane segment at 275 to 297 (LALYSLAFFLLVTVHFGTKDLYV) threads the bilayer. H289 contacts H(+). Residues 298-310 (LYELGSPLCWASD) are Extracellular-facing. The chain crosses the membrane as a helical span at residues 311 to 333 (LIGYGSAASYLAYLSSLGGLRLL). Y323 provides a ligand contact to pemetrexed. At 334–339 (QLCLED) the chain is on the cytoplasmic side. The chain crosses the membrane as a helical span at residues 340–359 (TWVAEIGLISNIAGLVVISL). At 360-363 (ATTT) the chain is on the extracellular side. Residues 364–384 (PLMFTGYGIMFLSMAATPVIR) form a helical membrane-spanning segment. Topologically, residues 385-396 (AKLSKLVGETEQ) are cytoplasmic. Residues 397-422 (GALFASVACVEGLCSLVATGVFNSLY) traverse the membrane as a helical segment. Pemetrexed contacts are provided by E407 and S411. Residues 423–430 (PSTLHFMR) are Extracellular-facing. Residues 431–449 (GFPFLFGAILLLIPAAIMG) traverse the membrane as a helical segment. The Cytoplasmic portion of the chain corresponds to 450–473 (WIEIQDSNLQYSHFSDASSSPADG).

Belongs to the major facilitator superfamily. SLC46A family. In terms of assembly, monomer. In terms of tissue distribution, widely expressed, including brain, aorta, liver, kidney, spleen, small intestine, pancreas, ovary and testis.

The protein localises to the cell membrane. The protein resides in the apical cell membrane. It localises to the basolateral cell membrane. Its subcellular location is the endosome membrane. It is found in the cytoplasm. The catalysed reaction is folate(in) + H(+)(in) = folate(out) + H(+)(out). It catalyses the reaction (6S)-5-methyl-5,6,7,8-tetrahydrofolate(in) + H(+)(in) = (6S)-5-methyl-5,6,7,8-tetrahydrofolate(out) + H(+)(out). The enzyme catalyses methotrexate(in) + H(+)(in) = methotrexate(out) + H(+)(out). It carries out the reaction pemetrexed(in) + H(+)(in) = pemetrexed(out) + H(+)(out). Its function is as follows. Proton-coupled folate symporter that mediates folate absorption using an H(+) gradient as a driving force. Involved in the intestinal absorption of folates at the brush-border membrane of the proximal jejunum, and the transport from blood to cerebrospinal fluid across the choroid plexus. Functions at acidic pH via alternate outward- and inward-open conformation states. Protonation of residues in the outward open state primes the protein for transport. Binding of folate promotes breaking of salt bridge network and subsequent closure of the extracellular gate, leading to the inward-open state and release of protons and folate. Also able to transport antifolate drugs, such as methotrexate and pemetrexed. Also acts as a lower-affinity, pH-independent heme carrier protein and constitutes the main importer of heme in the intestine. Imports heme in the retina and retinal pigment epithelium, in neurons of the hippocampus, in hepatocytes and in the renal epithelial cells. This chain is Proton-coupled folate transporter, found in Gallus gallus (Chicken).